The following is a 319-amino-acid chain: 7,8-didemethyl-8-hydroxy-5-deazariboflavin synthase (319 aa).

A Radical SAM core domain is found at 5 to 236; the sequence is VTYSPAYTIV…SNITLQIPPN (232 aa). [4Fe-4S] cluster contacts are provided by C19, C23, and C26.

This sequence belongs to the radical SAM superfamily. CofG family. In terms of assembly, consists of two subunits, CofG and CofH. [4Fe-4S] cluster is required as a cofactor.

It catalyses the reaction 5-amino-5-(4-hydroxybenzyl)-6-(D-ribitylimino)-5,6-dihydrouracil + S-adenosyl-L-methionine = 7,8-didemethyl-8-hydroxy-5-deazariboflavin + 5'-deoxyadenosine + L-methionine + NH4(+) + H(+). Its pathway is cofactor biosynthesis; coenzyme F0 biosynthesis. Functionally, catalyzes the radical-mediated synthesis of 7,8-didemethyl-8-hydroxy-5-deazariboflavin from 5-amino-5-(4-hydroxybenzyl)-6-(D-ribitylimino)-5,6-dihydrouracil. The protein is 7,8-didemethyl-8-hydroxy-5-deazariboflavin synthase of Trichodesmium erythraeum (strain IMS101).